Reading from the N-terminus, the 188-residue chain is MSHAPANRPFDPAEYINSEIRTVPDWPQAGVQFRDITPLLQKPKSLRVLIDLFVQRYIDQKLDYVAGLDARGFIIGPILAYELNLGFIPIRKIGKLPFRTVSESYELEYGSATVEIHEDACKPGDRVVIVDDLIATGGTMMAGKKLLERLGATVIEGAAIVDLPDLGGSKLLRGAGLPLFTVTSFGGH.

The protein belongs to the purine/pyrimidine phosphoribosyltransferase family. As to quaternary structure, homodimer.

It localises to the cytoplasm. The catalysed reaction is AMP + diphosphate = 5-phospho-alpha-D-ribose 1-diphosphate + adenine. The protein operates within purine metabolism; AMP biosynthesis via salvage pathway; AMP from adenine: step 1/1. Catalyzes a salvage reaction resulting in the formation of AMP, that is energically less costly than de novo synthesis. This chain is Adenine phosphoribosyltransferase, found in Paraburkholderia phymatum (strain DSM 17167 / CIP 108236 / LMG 21445 / STM815) (Burkholderia phymatum).